The primary structure comprises 190 residues: Histone-arginine methyltransferase METTL23 (190 aa).

Belongs to the methyltransferase superfamily. METTL23 family. As to quaternary structure, interacts with HSPA5, HSP90B1, TUBULIN, UGGT1 and UGGT2. Interacts with TET3. Interacts with STPG4.

It is found in the nucleus. The protein localises to the cytoplasm. It carries out the reaction L-arginyl-[protein] + 2 S-adenosyl-L-methionine = N(omega),N(omega)-dimethyl-L-arginyl-[protein] + 2 S-adenosyl-L-homocysteine + 2 H(+). In terms of biological role, histone methyltransferase that dimethylates histone H3 at 'Arg-17', forming asymmetric dimethylarginine (H3R17me2a), leading to activate transcription via chromatin remodeling. Maternal factor involved in epigenetic chromatin reprogramming of the paternal genome in the zygote: mediates H3R17me2a, promoting histone H3.3 incorporation in the male pronucleus, leading to TET3 recruitment and subsequent DNA demethylation. This Homo sapiens (Human) protein is Histone-arginine methyltransferase METTL23.